A 429-amino-acid polypeptide reads, in one-letter code: Actin-like protein 6A (429 aa).

The residue at position 2 (S2) is an N-acetylserine. Residue K62 forms a Glycyl lysine isopeptide (Lys-Gly) (interchain with G-Cter in SUMO2) linkage. A phosphoserine mark is found at S86 and S233.

It belongs to the actin family. As to quaternary structure, component of numerous complexes with chromatin remodeling and histone acetyltransferase activity. Component of the NuA4 histone acetyltransferase complex which contains the catalytic subunit KAT5/TIP60 and the subunits EP400, TRRAP/PAF400, BRD8/SMAP, EPC1, DMAP1/DNMAP1, RUVBL1/TIP49, RUVBL2, ING3, actin, ACTL6A/BAF53A, MORF4L1/MRG15, MORF4L2/MRGX, MRGBP, YEATS4/GAS41, VPS72/YL1 and MEAF6. The NuA4 complex interacts with MYC and the adenovirus E1A protein. Component of a NuA4-related complex which contains EP400, TRRAP/PAF400, SRCAP, BRD8/SMAP, EPC1, DMAP1/DNMAP1, RUVBL1/TIP49, RUVBL2, actin, ACTL6A/BAF53A, VPS72 and YEATS4/GAS41. Component of the multiprotein chromatin-remodeling complexes SWI/SNF: SWI/SNF-A (BAF), SWI/SNF-B (PBAF) and related complexes. The canonical complex contains a catalytic subunit (either SMARCA4/BRG1/BAF190A or SMARCA2/BRM/BAF190B) and at least SMARCE1, ACTL6A/BAF53, SMARCC1/BAF155, SMARCC2/BAF170, and SMARCB1/SNF5/BAF47. Other subunits specific to each of the complexes may also be present permitting several possible combinations developmentally and tissue specific. Component of the BAF complex, which includes at least actin (ACTB), ARID1A/BAF250A, ARID1B/BAF250B, SMARCA2/BRM, SMARCA4/BRG1/BAF190A, ACTL6A/BAF53, ACTL6B/BAF53B, SMARCE1/BAF57, SMARCC1/BAF155, SMARCC2/BAF170, SMARCB1/SNF5/INI1, and one or more SMARCD1/BAF60A, SMARCD2/BAF60B, or SMARCD3/BAF60C. In muscle cells, the BAF complex also contains DPF3. Component of the BAF53 complex, at least composed of ACTL6A/BAF53A, RUVBL1/TIP49, SMARCA2/BRM/BAF190B and TRRAP/PAF400, and which may also include a HAT activity related to, but distinct from, that of KAT5. Component of neural progenitors-specific chromatin remodeling complex (npBAF complex) composed of at least, ARID1A/BAF250A or ARID1B/BAF250B, SMARCD1/BAF60A, SMARCD3/BAF60C, SMARCA2/BRM/BAF190B, SMARCA4/BRG1/BAF190A, SMARCB1/BAF47, SMARCC1/BAF155, SMARCE1/BAF57, SMARCC2/BAF170, PHF10/BAF45A, ACTL6A/BAF53A and actin. Component of SWI/SNF (GBAF) subcomplex, which includes at least BICRA or BICRAL (mutually exclusive), BRD9, SS18, SMARCA2/BRM, SMARCA4/BRG1/BAF190A, ACTL6A/BAF53, SMARCC1/BAF155, and SMARCD1/BAF60A. May be a component of the SWI/SNF-B (PBAF) chromatin remodeling complex, at least composed of SMARCA4/BRG1, SMARCB1/BAF47/SNF5, ACTL6A/BAF53A or ACTL6B/BAF53B, SMARCE1/BAF57, SMARCD1/BAF60A, SMARCD2/BAF60B, perhaps SMARCD3/BAF60C, SMARCC1/BAF155, SMARCC2/BAF170, PBRM1/BAF180, ARID2/BAF200 and actin. Interacts with SMARCA4/BRG1/BAF190A. Interacts with PHF10/BAF45A. Component of the chromatin remodeling INO80 complex; specifically part of a complex module associated with the DBINO domain of INO80. Interacts with DPF2. In terms of tissue distribution, widely expressed. Expressed selectively in neural stem and progenitor cells (at protein level).

The protein resides in the nucleus. Involved in transcriptional activation and repression of select genes by chromatin remodeling (alteration of DNA-nucleosome topology). Component of SWI/SNF chromatin remodeling complexes that carry out key enzymatic activities, changing chromatin structure by altering DNA-histone contacts within a nucleosome in an ATP-dependent manner. Required for maximal ATPase activity of SMARCA4/BRG1/BAF190A and for association of the SMARCA4/BRG1/BAF190A containing remodeling complex BAF with chromatin/nuclear matrix. Belongs to the neural progenitors-specific chromatin remodeling complex (npBAF complex) and is required for the proliferation of neural progenitors. During neural development a switch from a stem/progenitor to a postmitotic chromatin remodeling mechanism occurs as neurons exit the cell cycle and become committed to their adult state. The transition from proliferating neural stem/progenitor cells to postmitotic neurons requires a switch in subunit composition of the npBAF and nBAF complexes. As neural progenitors exit mitosis and differentiate into neurons, npBAF complexes which contain ACTL6A/BAF53A and PHF10/BAF45A, are exchanged for homologous alternative ACTL6B/BAF53B and DPF1/BAF45B or DPF3/BAF45C subunits in neuron-specific complexes (nBAF). The npBAF complex is essential for the self-renewal/proliferative capacity of the multipotent neural stem cells. The nBAF complex along with CREST plays a role regulating the activity of genes essential for dendrite growth. Component of the NuA4 histone acetyltransferase (HAT) complex which is involved in transcriptional activation of select genes principally by acetylation of nucleosomal histones H4 and H2A. This modification may both alter nucleosome - DNA interactions and promote interaction of the modified histones with other proteins which positively regulate transcription. This complex may be required for the activation of transcriptional programs associated with oncogene and proto-oncogene mediated growth induction, tumor suppressor mediated growth arrest and replicative senescence, apoptosis, and DNA repair. NuA4 may also play a direct role in DNA repair when recruited to sites of DNA damage. Putative core component of the chromatin remodeling INO80 complex which is involved in transcriptional regulation, DNA replication and probably DNA repair. In Mus musculus (Mouse), this protein is Actin-like protein 6A (Actl6a).